A 235-amino-acid chain; its full sequence is Ribose-5-phosphate isomerase A (235 aa).

Residues 32–35, 89–92, and 102–105 each bind substrate; these read TGST, DGAD, and KGGG. The active-site Proton acceptor is glutamate 111. Residue lysine 129 coordinates substrate.

This sequence belongs to the ribose 5-phosphate isomerase family. Homodimer.

It catalyses the reaction aldehydo-D-ribose 5-phosphate = D-ribulose 5-phosphate. It participates in carbohydrate degradation; pentose phosphate pathway; D-ribose 5-phosphate from D-ribulose 5-phosphate (non-oxidative stage): step 1/1. Functionally, catalyzes the reversible conversion of ribose-5-phosphate to ribulose 5-phosphate. The chain is Ribose-5-phosphate isomerase A from Synechocystis sp. (strain ATCC 27184 / PCC 6803 / Kazusa).